A 358-amino-acid chain; its full sequence is Homoserine O-acetyltransferase (358 aa).

The AB hydrolase-1 domain maps to 52 to 337 (NVILICHALT…DEPYGHDAFL (286 aa)). Catalysis depends on serine 148, which acts as the Nucleophile. Arginine 217 is a substrate binding site. Catalysis depends on residues aspartate 304 and histidine 333. Aspartate 334 is a substrate binding site.

The protein belongs to the AB hydrolase superfamily. MetX family. Homodimer.

The protein localises to the cytoplasm. The enzyme catalyses L-homoserine + acetyl-CoA = O-acetyl-L-homoserine + CoA. The protein operates within amino-acid biosynthesis; L-methionine biosynthesis via de novo pathway; O-acetyl-L-homoserine from L-homoserine: step 1/1. Its function is as follows. Transfers an acetyl group from acetyl-CoA to L-homoserine, forming acetyl-L-homoserine. The polypeptide is Homoserine O-acetyltransferase (Chlorobium luteolum (strain DSM 273 / BCRC 81028 / 2530) (Pelodictyon luteolum)).